The chain runs to 828 residues: Translation initiation factor IF-2 (828 aa).

2 disordered regions span residues 48 to 76 (SYSG…SEEF) and 112 to 137 (ASQE…EPKI). The span at 49 to 58 (YSGSTTTLSL) shows a compositional bias: polar residues. A compositionally biased stretch (low complexity) spans 65 to 74 (LETGSSSGSE). Residues 116–126 (DPIEVEQEESS) show a composition bias toward acidic residues. Over residues 127–137 (DTNKVKEEPKI) the composition is skewed to basic and acidic residues. The region spanning 326 to 496 (SRAPVVTVMG…LLIAEMQNLK (171 aa)) is the tr-type G domain. The interval 335-342 (GHVDHGKT) is G1. Position 335-342 (335-342 (GHVDHGKT)) interacts with GTP. A G2 region spans residues 360-364 (GITQH). Residues 382–385 (DTPG) form a G3 region. Residues 382 to 386 (DTPGH) and 436 to 439 (NKID) each bind GTP. Positions 436–439 (NKID) are G4. The segment at 472–474 (SAL) is G5.

The protein belongs to the TRAFAC class translation factor GTPase superfamily. Classic translation factor GTPase family. IF-2 subfamily.

Its subcellular location is the cytoplasm. Its function is as follows. One of the essential components for the initiation of protein synthesis. Protects formylmethionyl-tRNA from spontaneous hydrolysis and promotes its binding to the 30S ribosomal subunits. Also involved in the hydrolysis of GTP during the formation of the 70S ribosomal complex. The protein is Translation initiation factor IF-2 of Rickettsia bellii (strain RML369-C).